Here is a 139-residue protein sequence, read N- to C-terminus: MNNRTIMAFDFGTRSIGAAIGQEITGTARALTSFKATDGIPNWGQIEKLLKEWQPDLVIVGLPLNMDGTEQFVTVQARKFANRLHGRFGVQVQLQDERLTTVEARAHLFDRGGYKALNKGKVDATSAVIILESWFEQRY.

It belongs to the YqgF nuclease family.

Its subcellular location is the cytoplasm. Functionally, could be a nuclease involved in processing of the 5'-end of pre-16S rRNA. In Photorhabdus laumondii subsp. laumondii (strain DSM 15139 / CIP 105565 / TT01) (Photorhabdus luminescens subsp. laumondii), this protein is Putative pre-16S rRNA nuclease.